Consider the following 161-residue polypeptide: Large ribosomal subunit protein uL11 (161 aa).

Belongs to the universal ribosomal protein uL11 family. Part of the ribosomal stalk of the 50S ribosomal subunit. Interacts with L10 and the large rRNA to form the base of the stalk. L10 forms an elongated spine to which L12 dimers bind in a sequential fashion forming a multimeric L10(L12)X complex.

Functionally, forms part of the ribosomal stalk which helps the ribosome interact with GTP-bound translation factors. In Methanosarcina mazei (strain ATCC BAA-159 / DSM 3647 / Goe1 / Go1 / JCM 11833 / OCM 88) (Methanosarcina frisia), this protein is Large ribosomal subunit protein uL11.